Reading from the N-terminus, the 256-residue chain is Trans-aconitate 2-methyltransferase (256 aa).

The protein belongs to the methyltransferase superfamily. Tam family.

It localises to the cytoplasm. It catalyses the reaction trans-aconitate + S-adenosyl-L-methionine = (E)-3-(methoxycarbonyl)pent-2-enedioate + S-adenosyl-L-homocysteine. Its function is as follows. Catalyzes the S-adenosylmethionine monomethyl esterification of trans-aconitate. The protein is Trans-aconitate 2-methyltransferase of Rhodopseudomonas palustris (strain HaA2).